A 1897-amino-acid polypeptide reads, in one-letter code: uncharacterized protein (1897 aa).

The 228-residue stretch at 1661 to 1888 (SDERVKTNIR…AKVISLESRL (228 aa)) folds into the Peptidase S74 domain. The stretch at 1865 to 1894 (AALQEIDRQLQLEKAKVISLESRLSALELK) forms a coiled coil.

This is an uncharacterized protein from Micromonas pusilla (Picoplanktonic green alga).